The sequence spans 351 residues: Photosystem II D2 protein (351 aa).

Residues threonine 39–threonine 59 traverse the membrane as a helical segment. Residue histidine 116 participates in chlorophyll a binding. A helical membrane pass occupies residues glycine 123–proline 139. 2 residues coordinate pheophytin a: glutamine 128 and asparagine 141. A helical membrane pass occupies residues valine 151–serine 164. Residue histidine 196 coordinates chlorophyll a. Residues glycine 206–glutamate 226 form a helical membrane-spanning segment. Histidine 213 and phenylalanine 260 together coordinate a plastoquinone. Histidine 213 contributes to the Fe cation binding site. Residue histidine 267 coordinates Fe cation. A helical membrane pass occupies residues glycine 277–arginine 293.

This sequence belongs to the reaction center PufL/M/PsbA/D family. In terms of assembly, PSII is composed of 1 copy each of membrane proteins PsbA, PsbB, PsbC, PsbD, PsbE, PsbF, PsbH, PsbI, PsbJ, PsbK, PsbL, PsbM, PsbT, PsbX, PsbY, PsbZ, Psb30/Ycf12, peripheral proteins PsbO, CyanoQ (PsbQ), PsbU, PsbV and a large number of cofactors. It forms dimeric complexes. Requires The D1/D2 heterodimer binds P680, chlorophylls that are the primary electron donor of PSII, and subsequent electron acceptors. It shares a non-heme iron and each subunit binds pheophytin, quinone, additional chlorophylls, carotenoids and lipids. There is also a Cl(-1) ion associated with D1 and D2, which is required for oxygen evolution. The PSII complex binds additional chlorophylls, carotenoids and specific lipids. as cofactor.

It localises to the host cellular thylakoid membrane. The catalysed reaction is 2 a plastoquinone + 4 hnu + 2 H2O = 2 a plastoquinol + O2. Photosystem II (PSII) is a light-driven water:plastoquinone oxidoreductase that uses light energy to abstract electrons from H(2)O, generating O(2) and a proton gradient subsequently used for ATP formation. It consists of a core antenna complex that captures photons, and an electron transfer chain that converts photonic excitation into a charge separation. The D1/D2 (PsbA/PsbD) reaction center heterodimer binds P680, the primary electron donor of PSII as well as several subsequent electron acceptors. D2 is needed for assembly of a stable PSII complex. The sequence is that of Photosystem II D2 protein (psbD) from Synechococcus phage S-RSM2.